Here is an 836-residue protein sequence, read N- to C-terminus: Transcription factor vrtR2 (836 aa).

Residues 1–26 (MPSLSSKTSTMQRSCRPQMSACPNQQ) are compositionally biased toward polar residues. Positions 1 to 29 (MPSLSSKTSTMQRSCRPQMSACPNQQQKD) are disordered. Positions 37–63 (CVLCRDRKLKCDKLDPCSNCTSSGVAC) form a DNA-binding region, zn(2)-C6 fungal-type. A disordered region spans residues 72-114 (PRGRHARTVQTKASTPPDTRRRGSSNESTTAPAPDDGGLGTHI). The segment covering 79 to 88 (TVQTKASTPP) has biased composition (polar residues).

The protein localises to the nucleus. Its function is as follows. Probable transcription factor that regulates expression of the gene cluster that mediates the biosynthesis of viridicatumtoxin, a tetracycline-like fungal meroterpenoid with a unique, fused spirobicyclic ring system. In Penicillium aethiopicum, this protein is Transcription factor vrtR2.